The chain runs to 304 residues: UTP--glucose-1-phosphate uridylyltransferase 1 (304 aa).

The protein belongs to the UDPGP type 2 family.

It catalyses the reaction alpha-D-glucose 1-phosphate + UTP + H(+) = UDP-alpha-D-glucose + diphosphate. It functions in the pathway carbohydrate metabolism; nucleotide-sugar metabolism. In Streptococcus pyogenes serotype M1, this protein is UTP--glucose-1-phosphate uridylyltransferase 1 (hasC1).